Here is a 949-residue protein sequence, read N- to C-terminus: Translation initiation factor IF-2 (949 aa).

2 disordered regions span residues 50–206 (FTEK…GAAR) and 220–359 (QNAE…TERK). Basic and acidic residues-rich tracts occupy residues 52 to 84 (EKPK…KVEK) and 104 to 143 (FKAE…DQGS). Polar residues-rich tracts occupy residues 144-154 (KNRNFNKSQGQ) and 164-180 (GSQQ…SNKP). Residues 187-206 (NAANRNQNNSQQERQVGAAR) are compositionally biased toward low complexity. Residues 224-275 (YMRHKETQLREQEEARRLAERAKEEARLAAQKAAEEKAKEAEKAAKTERFEP) show a composition bias toward basic and acidic residues. Low complexity predominate over residues 319–336 (KSWNNQNQVRNQRNSNWN). Positions 450–619 (ERAPVVTIMG…LLVAEVEELK (170 aa)) constitute a tr-type G domain. Residues 459-466 (GHVDHGKT) are G1. 459–466 (GHVDHGKT) provides a ligand contact to GTP. The tract at residues 484–488 (GITQH) is G2. Residues 505-508 (DTPG) form a G3 region. Residues 505–509 (DTPGH) and 559–562 (NKID) contribute to the GTP site. A G4 region spans residues 559–562 (NKID). Residues 595–597 (SAK) are G5.

The protein belongs to the TRAFAC class translation factor GTPase superfamily. Classic translation factor GTPase family. IF-2 subfamily.

The protein localises to the cytoplasm. In terms of biological role, one of the essential components for the initiation of protein synthesis. Protects formylmethionyl-tRNA from spontaneous hydrolysis and promotes its binding to the 30S ribosomal subunits. Also involved in the hydrolysis of GTP during the formation of the 70S ribosomal complex. The polypeptide is Translation initiation factor IF-2 (Streptococcus uberis (strain ATCC BAA-854 / 0140J)).